The following is a 689-amino-acid chain: MFERNQKTIFVLDHTRYFSIASEEYISMDFLKGKPSADGGATGAAGNATGGGGSQFSKSLWTCACESSIEYCRVVWDLFPGKKHVRFIVSDTAAHIVNTWSHSTQNMSHVMNAMVMVGVPSRNVATSSDYSVIHGLRAAIEALAEPTDEQLAAMADLGTDELPRIPNKGRVICITSARDNTSMKSLEDIFNTVLVQQNALAAPPAKKGLVIDHCHLVILNIVPLGVESLVTNRSLLKISPLLDVEIHTVSAPDISYKLTHLILNHYDLASTTVTNIPMKEEQNANSSANYDVEILHSRRAHSITCGPDFSLPTSIKQGATYETVTLKWCTPRGCGSADLQPCLGQFLVTPVDVTSRPSSCLINFLLNGRSVLLEMPRKTGSKATSHMLSARGGEIFVHSLCITRSCMDEAPSITDGPGGRVSDYRTAELGQLIKMSRMVPLKVKDPSAPPLARRLPRYFPLTTSSSILFHLQRHINWLPHFLHILVKEDMDKQDEVRCQQHIHELYKSASRGDVLPFTHTNGARLKLSKAKDQYRLLYRELEQLIQLNATTMHHKNLLESLQSLRAAYGDAPLKSEPGASLLRSYTESPLSPERLEPITSGSASGSSNSNSLLKASKRRMSSCGQRSLLDIISSAERSQSNKRLDFSGRLCTPLGQVAKLYPDFGNKDKDSVVTAASITPNVKEESVRS.

Positions 521–550 (NGARLKLSKAKDQYRLLYRELEQLIQLNAT) form a coiled coil. Positions 578–619 (GASLLRSYTESPLSPERLEPITSGSASGSSNSNSLLKASKRR) are disordered. Over residues 600–614 (SGSASGSSNSNSLLK) the composition is skewed to low complexity. A Nuclear localization signal (NLS) motif is present at residues 613-619 (LKASKRR).

The protein belongs to the Integrator subunit 13 family. Belongs to the multiprotein complex Integrator, at least composed of IntS1, IntS2, IntS3, IntS4, omd/IntS5, IntS6, defl/IntS7, IntS8, IntS9, IntS10, IntS11, IntS12, asun/IntS13, IntS14 and IntS15. The core complex associates with protein phosphatase 2A subunits mts/PP2A and Pp2A-29B, to form the Integrator-PP2A (INTAC) complex. In terms of processing, phosphorylated.

It is found in the nucleus. The protein localises to the cytoplasm. It localises to the perinuclear region. In terms of biological role, component of the integrator complex, a multiprotein complex that terminates RNA polymerase II (Pol II) transcription in the promoter-proximal region of genes. The integrator complex provides a quality checkpoint during transcription elongation by driving premature transcription termination of transcripts that are unfavorably configured for transcriptional elongation: the complex terminates transcription by (1) catalyzing dephosphorylation of the C-terminal domain (CTD) of Pol II subunit Polr2A/Rbp1 and Spt5, and (2) degrading the exiting nascent RNA transcript via endonuclease activity. The integrator complex is also involved in the 3'-end processing of the U7 snRNA, and also the spliceosomal snRNAs U1, U2, U4 and U5. This Drosophila erecta (Fruit fly) protein is Protein asunder (asun).